The chain runs to 206 residues: Recombination protein RecR (206 aa).

The C4-type zinc finger occupies Cys58–Cys73. The Toprim domain maps to Gln81 to Ser176.

The protein belongs to the RecR family.

Its function is as follows. May play a role in DNA repair. It seems to be involved in an RecBC-independent recombinational process of DNA repair. It may act with RecF and RecO. This is Recombination protein RecR from Flavobacterium johnsoniae (strain ATCC 17061 / DSM 2064 / JCM 8514 / BCRC 14874 / CCUG 350202 / NBRC 14942 / NCIMB 11054 / UW101) (Cytophaga johnsonae).